We begin with the raw amino-acid sequence, 434 residues long: MDSFFINGYVPRDTFIHRLHPTTKLLIFLLFVILVFVPIGFVFQSVIFVFATVIFFVAKLPGRFYLSSIKSISLLFLLLLFVNWFTFRDPGFYITADQVNTVKPHFNGNNFNFWNISLFNYQDNVFSQVFNFNRANMTELNKINFFFKETANANAYTKVTGIDKLAEMLASKNLFKFNGSTNGIDKNKILGAFLDHKIAVYLGRSWGGDFSGFVIDVSVSDKTSTFTIKPFLANSNYVLTLRAIILAFYVTQKILIMIILATVLTSTSSSVELAYGIERLLWPLKLLRVPVNVFAMTIAIAIRFVPSLLLESQRILNAQASRGLDFKNGNFFVKMRSLSSLVVPMISIAFRNAGELASAMEARGYDPTKKRTTYRKFKIDWVDATALILTALYFVVIIFLTVKGAVFLDLGTPEWLLTGKIKEQVERSLSVKSA.

5 helical membrane passes run 27-47, 64-84, 244-264, 289-309, and 387-407; these read IFLL…QSVI, FYLS…FVNW, IILA…ATVL, VPVN…PSLL, and LILT…GAVF.

This sequence belongs to the CbiQ family.

Its subcellular location is the cell membrane. This is an uncharacterized protein from Mycoplasma pneumoniae (strain ATCC 29342 / M129 / Subtype 1) (Mycoplasmoides pneumoniae).